The primary structure comprises 103 residues: MAAKIRQNDEVIVLTGKDKGKRGKVTKVLPNGKVFVEGINIITKHEKPVPALGKAGGLVKKEAAIEASNVAIFNPKTNKADRVGFRFEDGKKVRFFKSNNEII.

Belongs to the universal ribosomal protein uL24 family. Part of the 50S ribosomal subunit.

Functionally, one of two assembly initiator proteins, it binds directly to the 5'-end of the 23S rRNA, where it nucleates assembly of the 50S subunit. Its function is as follows. One of the proteins that surrounds the polypeptide exit tunnel on the outside of the subunit. This Haemophilus influenzae (strain PittEE) protein is Large ribosomal subunit protein uL24.